The chain runs to 266 residues: Glioma pathogenesis-related protein 1 (266 aa).

A signal peptide spans 1 to 21; it reads MRVTLATIAWMVSFVSNYSHT. One can recognise an SCP domain in the interval 38–175; the sequence is VRIHNKFRSE…SNGAHFICNY (138 aa). The chain crosses the membrane as a helical span at residues 233–255; it reads YTSLFLIVNSVILILSVIITILV.

This sequence belongs to the CRISP family. In terms of tissue distribution, according to PubMed:8973356, it is ubiquitously expressed with high levels in lung and kidney and low levels in heart and liver. Highly expressed in cell lines derived from nervous system tumors arising from glia, low or absent in non-glial-derived nervous system tumor cell lines. Also found in fetal kidney. According to PubMed:7607567 it is expressed only in brain tumor glioblastoma multiforme/astrocytoma and not in other nervous system tumors or normal fetal or adult tissues.

It localises to the membrane. This is Glioma pathogenesis-related protein 1 (GLIPR1) from Homo sapiens (Human).